Reading from the N-terminus, the 227-residue chain is 27 kDa A-type inclusion protein (227 aa).

Residues 4–210 (MPKQREMRRL…AECRRGNNGS (207 aa)) adopt a coiled-coil conformation.

The sequence is that of 27 kDa A-type inclusion protein from Bos taurus (Bovine).